We begin with the raw amino-acid sequence, 67 residues long: MTYSFFVDMTCGGCSKAVNAILSKIDGVSNIQIDLENKKVSCESSKMGADELLKNIQKTGKKCSIIA.

Residues 1-64 (MTYSFFVDMT…NIQKTGKKCS (64 aa)) enclose the HMA domain. Cu cation-binding residues include Cys11 and Cys14.

Belongs to the ATX1 family.

In terms of biological role, could bind and deliver cytosolic copper to the copper ATPase proteins. May be important in cellular antioxidant defense. The protein is Copper transport protein ATOX1 homolog (atox1) of Dictyostelium discoideum (Social amoeba).